We begin with the raw amino-acid sequence, 242 residues long: Response regulator GtcR (242 aa).

Residues 4–117 (TILIADDEPE…EAVARIQAQL (114 aa)) form the Response regulatory domain. D53 carries the post-translational modification 4-aspartylphosphate. A DNA-binding region (ompR/PhoB-type) is located at residues 133–233 (TQSTTVGRLT…VRGLGYKFAS (101 aa)).

Post-translationally, phosphorylated by GtcS.

Member of the two-component regulatory system GtcS/GtcR which may act in the control of the transcription of the grs operon which encodes the multienzymes involved in the biosynthesis of the peptide antibiotic gramicidin S. The sequence is that of Response regulator GtcR (gtcR) from Aneurinibacillus migulanus (Bacillus migulanus).